The following is a 103-amino-acid chain: Integration host factor subunit beta (103 aa).

It belongs to the bacterial histone-like protein family. As to quaternary structure, heterodimer of an alpha and a beta chain.

Its function is as follows. This protein is one of the two subunits of integration host factor, a specific DNA-binding protein that functions in genetic recombination as well as in transcriptional and translational control. This Rhizobium meliloti (strain 1021) (Ensifer meliloti) protein is Integration host factor subunit beta.